The chain runs to 85 residues: UPF0473 protein CLK_1946 (85 aa).

It belongs to the UPF0473 family.

The chain is UPF0473 protein CLK_1946 from Clostridium botulinum (strain Loch Maree / Type A3).